Reading from the N-terminus, the 146-residue chain is Ribonuclease H (146 aa).

In terms of domain architecture, RNase H type-1 spans 1 to 136 (MKHIEIYTDG…CDTLAREAAL (136 aa)). 4 residues coordinate Mg(2+): aspartate 9, glutamate 47, aspartate 69, and aspartate 128.

It belongs to the RNase H family. Monomer. Mg(2+) is required as a cofactor.

The protein localises to the cytoplasm. It carries out the reaction Endonucleolytic cleavage to 5'-phosphomonoester.. Endonuclease that specifically degrades the RNA of RNA-DNA hybrids. The sequence is that of Ribonuclease H from Campylobacter jejuni subsp. jejuni serotype O:23/36 (strain 81-176).